A 182-amino-acid chain; its full sequence is Adenine phosphoribosyltransferase (182 aa).

The protein belongs to the purine/pyrimidine phosphoribosyltransferase family. As to quaternary structure, homodimer.

It localises to the cytoplasm. It catalyses the reaction AMP + diphosphate = 5-phospho-alpha-D-ribose 1-diphosphate + adenine. It functions in the pathway purine metabolism; AMP biosynthesis via salvage pathway; AMP from adenine: step 1/1. Catalyzes a salvage reaction resulting in the formation of AMP, that is energically less costly than de novo synthesis. The sequence is that of Adenine phosphoribosyltransferase from Campylobacter fetus subsp. fetus (strain 82-40).